The primary structure comprises 319 residues: MTETFQHYTVMLKETVDGLNIKPDGIYVDCTLGGAGHSEYLLSQLNTNGHLYAFDQDQKAIDHAKVRLAPYIEKGMVTFIKANFRELEAKIKEHVPQVDGILYDLGVSSPQLDEAERGFSYHQDAPLDMRMDQSAPLSAYDVVNEYSYNELVKIFFRYGEEKFSKQIAREIERVRKIHPIQTTGELVEIIKDVIPAPARRKGGHPAKRIFQAIRIAVNDELGAEEASLEQAIRLLKINGRISVITFHSLEDRIVKSMFKEYSTVQDLPPGLPVVPEEFQPELKLINRKPILPSEEELSENNRSRSAKLRIAEKIRVKEE.

Residues 35 to 37 (AGH), Asp-55, Phe-84, Asp-104, and Gln-111 each bind S-adenosyl-L-methionine.

It belongs to the methyltransferase superfamily. RsmH family.

It is found in the cytoplasm. The enzyme catalyses cytidine(1402) in 16S rRNA + S-adenosyl-L-methionine = N(4)-methylcytidine(1402) in 16S rRNA + S-adenosyl-L-homocysteine + H(+). Specifically methylates the N4 position of cytidine in position 1402 (C1402) of 16S rRNA. This is Ribosomal RNA small subunit methyltransferase H from Enterococcus hirae.